We begin with the raw amino-acid sequence, 395 residues long: Succinate--CoA ligase [ADP-forming] subunit beta (395 aa).

The ATP-grasp domain maps to 9-240 (RDVFEKHGVP…AASADPLEAK (232 aa)). ATP contacts are provided by residues K49, 56 to 58 (GRG), A98, and E103. 2 residues coordinate Mg(2+): N195 and D209. Substrate is bound by residues N260 and 322–324 (GIT).

Belongs to the succinate/malate CoA ligase beta subunit family. Heterotetramer of two alpha and two beta subunits. Mg(2+) serves as cofactor.

It carries out the reaction succinate + ATP + CoA = succinyl-CoA + ADP + phosphate. It catalyses the reaction GTP + succinate + CoA = succinyl-CoA + GDP + phosphate. The protein operates within carbohydrate metabolism; tricarboxylic acid cycle; succinate from succinyl-CoA (ligase route): step 1/1. Functionally, succinyl-CoA synthetase functions in the citric acid cycle (TCA), coupling the hydrolysis of succinyl-CoA to the synthesis of either ATP or GTP and thus represents the only step of substrate-level phosphorylation in the TCA. The beta subunit provides nucleotide specificity of the enzyme and binds the substrate succinate, while the binding sites for coenzyme A and phosphate are found in the alpha subunit. The chain is Succinate--CoA ligase [ADP-forming] subunit beta from Beutenbergia cavernae (strain ATCC BAA-8 / DSM 12333 / CCUG 43141 / JCM 11478 / NBRC 16432 / NCIMB 13614 / HKI 0122).